Consider the following 566-residue polypeptide: Erythroid membrane-associated protein (566 aa).

A signal peptide spans 1-29; it reads MERPSPCGSWLVGCLFTIAVFQPPVQVLG. Residues 30–139 form the Ig-like V-type domain; that stretch reads DAGKVYIAPL…SSREDNVTLQ (110 aa). At 30–246 the chain is on the extracellular side; it reads DAGKVYIAPL…PERGSLSSPA (217 aa). C47 and C123 are joined by a disulfide. N-linked (GlcNAc...) asparagine glycans are attached at residues N135 and N214. Residues 247–267 form a helical membrane-spanning segment; the sequence is VALSVVLPVLGLLILLGIWLI. At 268–566 the chain is on the cytoplasmic side; that stretch reads CKQKKSKEKL…ALKGLKVPSL (299 aa). A B30.2/SPRY domain is found at 311–509; it reads KLKRAAANAG…LIICTELQKS (199 aa). S509 carries the phosphoserine modification.

The protein belongs to the immunoglobulin superfamily. BTN/MOG family. Glycosylated. As to expression, expressed in spleen and bone marrow.

The protein localises to the cell membrane. It is found in the cytoplasm. Possible role as a cell-adhesion or receptor molecule of erythroid cells. The protein is Erythroid membrane-associated protein (Ermap) of Mus musculus (Mouse).